Here is a 150-residue protein sequence, read N- to C-terminus: MALDQSLVGRSYPPTAPYEVGREKIREFAEAVGDANPAYTDAEAAKALGHPDVIAPPTFVFSITFKAAGQVIEDPQLGLDYSRVVHGDQKFSYARPVRAGDRLTVTSTIEAIKSMAGNDILDIRGEVHDEAGEHVVTAWTKLVARAAEEA.

The MaoC-like domain maps to 8-116 (VGRSYPPTAP…STIEAIKSMA (109 aa)).

Belongs to the UPF0336 family.

The sequence is that of UPF0336 protein SCO4636 from Streptomyces coelicolor (strain ATCC BAA-471 / A3(2) / M145).